We begin with the raw amino-acid sequence, 270 residues long: Gene 1 protein (270 aa).

The segment at 225 to 249 (WAEEDPPVAAVPLEPEDATAPGKEP) is disordered.

The protein is Gene 1 protein (1) of Mycobacterium (Mycobacteriophage D29).